The following is a 151-amino-acid chain: Deoxyuridine 5'-triphosphate nucleotidohydrolase (151 aa).

Residues 70-72 (RSG), Asn83, 87-89 (LID), and Met97 each bind substrate.

The protein belongs to the dUTPase family. Requires Mg(2+) as cofactor.

The catalysed reaction is dUTP + H2O = dUMP + diphosphate + H(+). Its pathway is pyrimidine metabolism; dUMP biosynthesis; dUMP from dCTP (dUTP route): step 2/2. This enzyme is involved in nucleotide metabolism: it produces dUMP, the immediate precursor of thymidine nucleotides and it decreases the intracellular concentration of dUTP so that uracil cannot be incorporated into DNA. The polypeptide is Deoxyuridine 5'-triphosphate nucleotidohydrolase (Psychromonas ingrahamii (strain DSM 17664 / CCUG 51855 / 37)).